Reading from the N-terminus, the 277-residue chain is Large ribosomal subunit protein uL2 (277 aa).

Residues glycine 215–lysine 277 are disordered. Over residues lysine 264–lysine 277 the composition is skewed to basic and acidic residues.

It belongs to the universal ribosomal protein uL2 family. As to quaternary structure, part of the 50S ribosomal subunit. Forms a bridge to the 30S subunit in the 70S ribosome.

In terms of biological role, one of the primary rRNA binding proteins. Required for association of the 30S and 50S subunits to form the 70S ribosome, for tRNA binding and peptide bond formation. It has been suggested to have peptidyltransferase activity; this is somewhat controversial. Makes several contacts with the 16S rRNA in the 70S ribosome. The polypeptide is Large ribosomal subunit protein uL2 (Clostridium acetobutylicum (strain ATCC 824 / DSM 792 / JCM 1419 / IAM 19013 / LMG 5710 / NBRC 13948 / NRRL B-527 / VKM B-1787 / 2291 / W)).